The following is a 356-amino-acid chain: DNA polymerase IV (356 aa).

Residues 6–187 enclose the UmuC domain; that stretch reads IIHVDMDYFF…LDIGDFPGVG (182 aa). D10 and D105 together coordinate Mg(2+). E106 is an active-site residue.

The protein belongs to the DNA polymerase type-Y family. Monomer. Requires Mg(2+) as cofactor.

It localises to the cytoplasm. It carries out the reaction DNA(n) + a 2'-deoxyribonucleoside 5'-triphosphate = DNA(n+1) + diphosphate. Poorly processive, error-prone DNA polymerase involved in untargeted mutagenesis. Copies undamaged DNA at stalled replication forks, which arise in vivo from mismatched or misaligned primer ends. These misaligned primers can be extended by PolIV. Exhibits no 3'-5' exonuclease (proofreading) activity. May be involved in translesional synthesis, in conjunction with the beta clamp from PolIII. The protein is DNA polymerase IV of Staphylococcus saprophyticus subsp. saprophyticus (strain ATCC 15305 / DSM 20229 / NCIMB 8711 / NCTC 7292 / S-41).